We begin with the raw amino-acid sequence, 197 residues long: Putative ankyrin repeat protein R875 (197 aa).

ANK repeat units lie at residues 78–106 (LNKC…DIRE), 107–136 (NDDC…DIRA), 138–166 (DDDA…NFRK), and 168–196 (NDYE…VLHE).

The polypeptide is Putative ankyrin repeat protein R875 (Acanthamoeba polyphaga mimivirus (APMV)).